We begin with the raw amino-acid sequence, 253 residues long: Putative B3 domain-containing protein Os03g0619850 (253 aa).

A DNA-binding region (TF-B3) is located at residues methionine 26–aspartate 119. 2 disordered regions span residues leucine 126 to proline 150 and histidine 230 to serine 253. Over residues histidine 230–methionine 239 the composition is skewed to basic and acidic residues.

The protein localises to the nucleus. The polypeptide is Putative B3 domain-containing protein Os03g0619850 (Oryza sativa subsp. japonica (Rice)).